We begin with the raw amino-acid sequence, 442 residues long: N-acetyl-S-alkylcysteine sulfoxide monooxygenase (442 aa).

Asp-58, Thr-95, His-145, Tyr-149, Ser-219, and Ser-220 together coordinate FMN.

The protein belongs to the NtaA/SnaA/DszA monooxygenase family. In terms of assembly, homodimer.

It carries out the reaction (R)-N-acetyl-S-benzyl-L-cysteine sulfoxide + FMNH2 + O2 = N-acetyl-S-hydroxy-L-cysteine + benzaldehyde + FMN + H2O + H(+). The protein operates within amino-acid metabolism. Functionally, involved in a cysteine salvage pathway from S-alkylcysteine. Catalyzes the C-S bond cleavage in N-acetyl-S-benzyl-L-cysteine sulfoxide leading to N-acetyl-S-hydroxy-L-cysteine and benzaldehyde. This pathway is likely important in the catabolism of alkylated cysteine generated by proteolysis of alkylated glutathione formed in the detoxification of a wide range of electrophiles. Has much less efficient activity with N-acetyl-S-methyl-L-cysteine sulfoxide as substrate. Cannot use S-alkylated L-cysteine sulfones and ketone analogs as substrates, demonstrating that the sulfoxide is required for activity. The chain is N-acetyl-S-alkylcysteine sulfoxide monooxygenase from Bacillus subtilis (strain 168).